The sequence spans 157 residues: Heat shock protein beta-9 (157 aa).

Residues 1 to 17 are compositionally biased toward low complexity; that stretch reads MQRVGSSLPSGSQSASQ. Disordered regions lie at residues 1–20 and 136–157; these read MQRV…QCPS and PPSE…KKLA. The sHSP domain maps to 35–148; that stretch reads QRLTEDAAAV…EAQTGPASRF (114 aa). The segment covering 148-157 has biased composition (basic residues); that stretch reads FRSRGSKKLA.

The protein belongs to the small heat shock protein (HSP20) family.

It localises to the cytoplasm. The protein localises to the nucleus. The protein is Heat shock protein beta-9 (HSPB9) of Bos taurus (Bovine).